A 375-amino-acid chain; its full sequence is tRNA-specific 2-thiouridylase MnmA (375 aa).

ATP contacts are provided by residues 8–15 (GLSGGVDS) and Met-34. Residues 104–106 (NPD) are interaction with target base in tRNA. Cys-109 acts as the Nucleophile in catalysis. The cysteines at positions 109 and 205 are disulfide-linked. An ATP-binding site is contributed by Gly-133. The segment at 155-157 (KDQ) is interaction with tRNA. Cys-205 (cysteine persulfide intermediate) is an active-site residue. The tract at residues 313-314 (RY) is interaction with tRNA.

It belongs to the MnmA/TRMU family.

The protein localises to the cytoplasm. The catalysed reaction is S-sulfanyl-L-cysteinyl-[protein] + uridine(34) in tRNA + AH2 + ATP = 2-thiouridine(34) in tRNA + L-cysteinyl-[protein] + A + AMP + diphosphate + H(+). In terms of biological role, catalyzes the 2-thiolation of uridine at the wobble position (U34) of tRNA, leading to the formation of s(2)U34. In Acholeplasma laidlawii (strain PG-8A), this protein is tRNA-specific 2-thiouridylase MnmA.